The primary structure comprises 552 residues: MTARGAAGRCPSSTWLGSRLLLVCLLMSRSIAKEVSEHCSHMIGNGHLKVLQQLIDSQMETSCQIAFEFVDQEQLDDPVCYLKKAFFLVQDIIDETMRFKDNTPNANATERLQELSNNLNSCFTKDYEEQNKACVRTFHETPLQLLEKIKNFFNETKNLLEKDWNIFTKNCNNSFAKCSSRDVVTKPDCNCLYPKATPSSDPASASPHQPPAPSMAPLAGLAWDDSQRTEGSSLLPSELPLRIEDPGSAKQRPPRSTCQTLESTEQPNHGDRLTEDSQPHPSAGGPVPGVEDILESSLGTNWVLEEASGEASEGFLTQEAKFSPSTPVGGSIQAETDRPRALSASPFPKSTEDQKPVDITDRPLTEVNPMRPIGQTQNNTPEKTDGTSTLREDHQEPGSPHIATPNPQRVSNSATPVAQLLLPKSHSWGIVLPLGELEGKRSTRDRRSPAELEGGSASEGAARPVARFNSIPLTDTGHVEQHEGSSDPQIPESVFHLLVPGIILVLLTVGGLLFYKWKWRSHRDPQTLDSSVGRPEDSSLTQDEDRQVELPV.

The signal sequence occupies residues 1–32 (MTARGAAGRCPSSTWLGSRLLLVCLLMSRSIA). At 33–492 (KEVSEHCSHM…EGSSDPQIPE (460 aa)) the chain is on the extracellular side. 3 cysteine pairs are disulfide-bonded: Cys-39/Cys-122, Cys-80/Cys-171, and Cys-134/Cys-178. N-linked (GlcNAc...) asparagine glycans are attached at residues Asn-107, Asn-154, and Asn-172. A compositionally biased stretch (low complexity) spans 197–207 (TPSSDPASASP). Residues 197–293 (TPSSDPASAS…GGPVPGVEDI (97 aa)) are disordered. Positions 254-267 (PRSTCQTLESTEQP) are enriched in polar residues. Positions 268-278 (NHGDRLTEDSQ) are enriched in basic and acidic residues. A glycan (O-linked (Xyl...) (chondroitin sulfate) serine) is linked at Ser-308. Disordered stretches follow at residues 321-412 (KFSP…RVSN) and 439-465 (GKRS…ARPV). Composition is skewed to basic and acidic residues over residues 350–364 (STED…DRPL), 382–396 (EKTD…DHQE), and 439–450 (GKRSTRDRRSPA). An O-linked (GalNAc...) threonine glycan is attached at Thr-360. The helical transmembrane segment at 493–515 (SVFHLLVPGIILVLLTVGGLLFY) threads the bilayer. The Cytoplasmic segment spans residues 516–552 (KWKWRSHRDPQTLDSSVGRPEDSSLTQDEDRQVELPV). Residues 525 to 552 (PQTLDSSVGRPEDSSLTQDEDRQVELPV) form a disordered region. Residues 543–552 (DEDRQVELPV) show a composition bias toward basic and acidic residues.

Homodimer or heterodimer; disulfide-linked. Likely to exist in multiple forms: homodimer consisting of 2 identical 150-200 kDa proteoglycan subunits, heterodimer consisting of a 150-200 kDa proteoglycan subunit and a truncated 43 kDa subunit, and homodimer consisting of 2 identical 43 kDa subunits. Interacts with CSF1R. N-glycosylated. In terms of processing, O-glycosylated; contains chondroitin sulfate.

Its subcellular location is the cell membrane. The protein localises to the secreted. It localises to the extracellular space. Cytokine that plays an essential role in the regulation of survival, proliferation and differentiation of hematopoietic precursor cells, especially mononuclear phagocytes, such as macrophages and monocytes. Promotes the release of pro-inflammatory chemokines, and thereby plays an important role in innate immunity and in inflammatory processes. Plays an important role in the regulation of osteoclast proliferation and differentiation, the regulation of bone resorption, and is required for normal bone development. Required for normal male and female fertility. Promotes reorganization of the actin cytoskeleton, regulates formation of membrane ruffles, cell adhesion and cell migration. Plays a role in lipoprotein clearance. The chain is Macrophage colony-stimulating factor 1 (Csf1) from Mus musculus (Mouse).